The following is a 226-amino-acid chain: UPF0758 protein CHY_0341 (226 aa).

Residues 104–226 (NFLNPDDVYN…YISMKAERLF (123 aa)) form the MPN domain. Positions 175, 177, and 188 each coordinate Zn(2+). A JAMM motif motif is present at residues 175 to 188 (HNHPSGDPTPSKED).

Belongs to the UPF0758 family.

The sequence is that of UPF0758 protein CHY_0341 from Carboxydothermus hydrogenoformans (strain ATCC BAA-161 / DSM 6008 / Z-2901).